The sequence spans 151 residues: Myosin light polypeptide 6 (151 aa).

At cysteine 2 the chain carries N-acetylcysteine. The region spanning 7–42 is the EF-hand 1 domain; the sequence is DQTAEFKEAFQLFDRTGDGKILYSQCGDVMRALGQN. Serine 57 is modified (phosphoserine). Position 81 is an N6-acetyllysine (lysine 81). An EF-hand 2 domain is found at 84-119; sequence GTYEDYVEGLRVFDKEGNGTVMGAEIRHVLVTLGEK.

In terms of assembly, myosin is a hexamer of 2 heavy chains and 4 light chains. Interacts with SPATA6.

Regulatory light chain of myosin. Does not bind calcium. The chain is Myosin light polypeptide 6 (MYL6) from Bos taurus (Bovine).